A 255-amino-acid polypeptide reads, in one-letter code: Coiled-coil domain-containing 92B (255 aa).

Residues 28 to 90 (LRDLHLEILR…AAANAELRRE (63 aa)) are a coiled coil. The disordered stretch occupies residues 149–255 (QRLQAPRPGP…SQPSAPGDPE (107 aa)). The span at 166-177 (PRRRALRARRPP) shows a compositional bias: basic residues. Pro residues predominate over residues 242–255 (QPAPSQPSAPGDPE).

The sequence is that of Coiled-coil domain-containing 92B from Homo sapiens (Human).